Here is a 191-residue protein sequence, read N- to C-terminus: dCTP deaminase (191 aa).

DCTP is bound by residues 112-117 (KSTYAR), 136-138 (TLE), Q157, Y173, and Q183. E138 serves as the catalytic Proton donor/acceptor.

The protein belongs to the dCTP deaminase family. As to quaternary structure, homotrimer.

The enzyme catalyses dCTP + H2O + H(+) = dUTP + NH4(+). It functions in the pathway pyrimidine metabolism; dUMP biosynthesis; dUMP from dCTP (dUTP route): step 1/2. Functionally, catalyzes the deamination of dCTP to dUTP. This Psychrobacter cryohalolentis (strain ATCC BAA-1226 / DSM 17306 / VKM B-2378 / K5) protein is dCTP deaminase.